The sequence spans 324 residues: Reaction center protein M chain (324 aa).

Topologically, residues 2 to 51 (ADYQTIYTQIQARGPHITVSGEWGDNDRVGKPFYSYWLGKIGDAQIGPIY) are cytoplasmic. The chain crosses the membrane as a helical span at residues 52–76 (LGASGIAAFAFGSTAILIILFNMAA). At 77-110 (EVHFDPLQFFRQFFWLGLYPPKAQYGMGIPPLHD) the chain is on the periplasmic side. The chain crosses the membrane as a helical span at residues 111–137 (GGWWLMAGLFMTLSLGSWWIRVYSRAR). Residues 138–142 (ALGLG) are Cytoplasmic-facing. Residues 143–166 (THIAWNFAAAIFFVLCIGCIHPTL) form a helical membrane-spanning segment. Residues 167 to 197 (VGSWSEGVPFGIWPHIDWLTAFSIRYGNFYY) lie on the Periplasmic side of the membrane. Positions 181 and 201 each coordinate (7R,8Z)-bacteriochlorophyll b. Residues 198 to 223 (CPWHGFSIGFAYGCGLLFAAHGATIL) traverse the membrane as a helical segment. Residues His218 and Glu233 each contribute to the Fe cation site. The Cytoplasmic segment spans residues 224–259 (AVARFGGDREIEQITDRGTAVERAALFWRWTIGFNA). Trp251 lines the a ubiquinone pocket. Residues 260–284 (TIESVHRWGWFFSLMVMVSASVGIL) traverse the membrane as a helical segment. Residue His265 participates in Fe cation binding. Over 285 to 324 (LTGTFVDNWYLWCVKHGAAPDYPAYLPATPDPASLPGAPK) the chain is Periplasmic.

It belongs to the reaction center PufL/M/PsbA/D family. As to quaternary structure, reaction center is composed of four bacteriochlorophylls, two bacteriopheophytins, two ubiquinones, one iron, and three highly hydrophobic polypeptide chains (designated L, M, and H).

It is found in the cellular chromatophore membrane. The reaction center is a membrane-bound complex that mediates the initial photochemical event in the electron transfer process of photosynthesis. The polypeptide is Reaction center protein M chain (pufM) (Blastochloris viridis (Rhodopseudomonas viridis)).